We begin with the raw amino-acid sequence, 379 residues long: Nucleosome assembly protein 1;2 (379 aa).

Residues Val-26–Glu-80 are a coiled coil. Ser-41 carries the post-translational modification Phosphoserine. Residues Leu-47–Gln-62 carry the Nuclear export signal motif. Positions Lys-222–Lys-227 match the Nuclear localization signal motif. A disordered region spans residues Ala-298–Gln-379. Acidic residues predominate over residues Val-299–Ala-342. Positions Lys-347 to Gly-360 are enriched in basic residues. Cys-376 bears the Cysteine methyl ester mark. A lipid anchor (S-farnesyl cysteine) is attached at Cys-376. A propeptide spans Lys-377–Gln-379 (removed in mature form).

The protein belongs to the nucleosome assembly protein (NAP) family. Can form homomeric and heteromeric protein complexes with NAP1;1, NAP1;3 and NAP1;4. Binds histone H2A. As to expression, ubiquitous.

The protein localises to the nucleus. It localises to the cytoplasm. May modulate chromatin structure by regulation of nucleosome assembly/disassembly. May function in nucleotide excision repair (NER). Involved in somatic homologous recombination. This chain is Nucleosome assembly protein 1;2 (NAP1;2), found in Arabidopsis thaliana (Mouse-ear cress).